A 362-amino-acid polypeptide reads, in one-letter code: N5-carboxyaminoimidazole ribonucleotide synthase (362 aa).

ATP-binding positions include R85, K125, 130 to 136, 158 to 161, E166, and 244 to 245; these read GYDGRGQ, EKFI, and NE. The ATP-grasp domain maps to 89-274; it reads KSLLDELNLS…QFELHLRALL (186 aa).

Belongs to the PurK/PurT family. Homodimer.

The enzyme catalyses 5-amino-1-(5-phospho-beta-D-ribosyl)imidazole + hydrogencarbonate + ATP = 5-carboxyamino-1-(5-phospho-D-ribosyl)imidazole + ADP + phosphate + 2 H(+). It functions in the pathway purine metabolism; IMP biosynthesis via de novo pathway; 5-amino-1-(5-phospho-D-ribosyl)imidazole-4-carboxylate from 5-amino-1-(5-phospho-D-ribosyl)imidazole (N5-CAIR route): step 1/2. Functionally, catalyzes the ATP-dependent conversion of 5-aminoimidazole ribonucleotide (AIR) and HCO(3)(-) to N5-carboxyaminoimidazole ribonucleotide (N5-CAIR). The chain is N5-carboxyaminoimidazole ribonucleotide synthase from Haemophilus influenzae (strain ATCC 51907 / DSM 11121 / KW20 / Rd).